Here is a 201-residue protein sequence, read N- to C-terminus: MSRYRGPRFKKIRRLGALPGLTNKKPRNGSDLRNQSRSGKKSQYRIRLEEKQKLRFHYGLTERQLLKYVRIARKAKGSTGQVLLQLLEMRLDNILFRLGMASTIPAARQLVNHRHILVNGRIVDIPSYRCKPRDIITAKDEQKSRALIQISLDSSPHEELPNHLTLHPFQYKGLVNQIIDSKWVGLKINELLVVEYYSRQT.

The tract at residues 17-44 (ALPGLTNKKPRNGSDLRNQSRSGKKSQY) is disordered. The 61-residue stretch at 89-149 (MRLDNILFRL…DEQKSRALIQ (61 aa)) folds into the S4 RNA-binding domain.

The protein belongs to the universal ribosomal protein uS4 family. As to quaternary structure, part of the 30S ribosomal subunit. Contacts protein S5. The interaction surface between S4 and S5 is involved in control of translational fidelity.

The protein resides in the plastid. It localises to the chloroplast. One of the primary rRNA binding proteins, it binds directly to 16S rRNA where it nucleates assembly of the body of the 30S subunit. Functionally, with S5 and S12 plays an important role in translational accuracy. The polypeptide is Small ribosomal subunit protein uS4c (rps4) (Nicotiana sylvestris (Wood tobacco)).